The following is a 138-amino-acid chain: Small ribosomal subunit protein uS11c (138 aa).

Residues 1-24 (MAKSPPRSGSRRPGRIGSRKSGRR) form a disordered region. The segment covering 9–24 (GSRRPGRIGSRKSGRR) has biased composition (basic residues).

It belongs to the universal ribosomal protein uS11 family. As to quaternary structure, part of the 30S ribosomal subunit.

The protein localises to the plastid. It localises to the chloroplast. The chain is Small ribosomal subunit protein uS11c from Citrus sinensis (Sweet orange).